The following is a 442-amino-acid chain: Serine hydroxymethyltransferase (442 aa).

Pyridoxal 5'-phosphate-binding positions include Tyr-54, 100-102 (SGS), and His-236. A disulfide bridge connects residues Cys-125 and Cys-364. Lys-237 is subject to N6-(pyridoxal phosphate)lysine. A pyridoxal 5'-phosphate-binding site is contributed by Gly-272.

Belongs to the SHMT family. In terms of assembly, homodimer. It depends on pyridoxal 5'-phosphate as a cofactor.

It localises to the cytoplasm. The protein localises to the mitochondrion matrix. Its subcellular location is the plastid. It is found in the apicoplast. The protein resides in the nucleus. The enzyme catalyses (6R)-5,10-methylene-5,6,7,8-tetrahydrofolate + glycine + H2O = (6S)-5,6,7,8-tetrahydrofolate + L-serine. Its pathway is one-carbon metabolism; tetrahydrofolate interconversion. Redox regulation; active in reducing conditions, inactive in oxidizing conditions. The reduction of the cysteine pairs allows the access binding of the tetrahydrofolate substrate to its binding site. This mechanism appears to be unique to Plasmodium species. Catalyzes the interconversion of serine to glycine accompanied with the production of 5,10-methylenetetrahydrofolate, a source of one-carbon units used by thymidylate synthase to convert dUMP to dTMP for DNA synthesis. Binds to its own mRNA and to the mRNA of bifunctional dihydrofolate reductase-thymidylate synthase (DHFR-TS) in vitro; the physiological relevance of this interaction is not clear. The chain is Serine hydroxymethyltransferase from Plasmodium falciparum (isolate 3D7).